The following is a 534-amino-acid chain: 5,6-dihydroxyindole-2-carboxylic acid oxidase (534 aa).

A signal peptide spans 1 to 23 (MLGPATFLPLTAALLLLIPGGRA). Residues 24-477 (QFPRQCVTPE…WPSRALNFTE (454 aa)) are Lumenal, melanosome-facing. 5 disulfides stabilise this stretch: cysteine 29/cysteine 40, cysteine 41/cysteine 65, cysteine 56/cysteine 99, cysteine 101/cysteine 110, and cysteine 113/cysteine 122. N-linked (GlcNAc...) asparagine glycans are attached at residues asparagine 96 and asparagine 104. N-linked (GlcNAc...) asparagine glycans are attached at residues asparagine 175 and asparagine 181. Zn(2+)-binding residues include histidine 192, histidine 215, and histidine 224. 2 cysteine pairs are disulfide-bonded: cysteine 258–cysteine 261 and cysteine 290–cysteine 303. N-linked (GlcNAc...) asparagine glycans are attached at residues asparagine 304 and asparagine 350. 2 residues coordinate Zn(2+): histidine 377 and histidine 381. N-linked (GlcNAc...) asparagine glycosylation is present at asparagine 385. Histidine 404 contacts Zn(2+). Residues 478 to 501 (IITIAVVAALVLVAVIFAAASCAV) form a helical membrane-spanning segment. Topologically, residues 502–534 (HRSRKDDVHQPLLGEQYPRYSEEYERDASQSAV) are cytoplasmic.

Belongs to the tyrosinase family. Cu(2+) serves as cofactor. The cofactor is Zn(2+).

It is found in the melanosome membrane. The catalysed reaction is 2 5,6-dihydroxyindole-2-carboxylate + O2 = 2 indole-5,6-quinone-2-carboxylate + 2 H2O. It functions in the pathway pigment biosynthesis; melanin biosynthesis. Plays a role in melanin biosynthesis. Catalyzes the oxidation of 5,6-dihydroxyindole-2-carboxylic acid (DHICA) into indole-5,6-quinone-2-carboxylic acid. May regulate or influence the type of melanin synthesized. Also to a lower extent, capable of hydroxylating tyrosine and producing melanin. This is 5,6-dihydroxyindole-2-carboxylic acid oxidase (TYRP1) from Ambystoma mexicanum (Axolotl).